A 165-amino-acid chain; its full sequence is UPF0254 protein MmarC5_0742 (165 aa).

Belongs to the UPF0254 family.

The sequence is that of UPF0254 protein MmarC5_0742 from Methanococcus maripaludis (strain C5 / ATCC BAA-1333).